Here is a 312-residue protein sequence, read N- to C-terminus: Coiled-coil domain-containing protein 160 homolog (312 aa).

Residues 126–281 (SEGAKFKNQL…EERKREKTHS (156 aa)) adopt a coiled-coil conformation.

It belongs to the CCDC160 family.

In Xenopus tropicalis (Western clawed frog), this protein is Coiled-coil domain-containing protein 160 homolog.